A 108-amino-acid polypeptide reads, in one-letter code: Large ribosomal subunit protein uL24 (108 aa).

Belongs to the universal ribosomal protein uL24 family. Part of the 50S ribosomal subunit.

One of two assembly initiator proteins, it binds directly to the 5'-end of the 23S rRNA, where it nucleates assembly of the 50S subunit. Functionally, one of the proteins that surrounds the polypeptide exit tunnel on the outside of the subunit. The sequence is that of Large ribosomal subunit protein uL24 from Moorella thermoacetica (strain ATCC 39073 / JCM 9320).